The following is a 152-amino-acid chain: Transcriptional regulator MraZ (152 aa).

SpoVT-AbrB domains follow at residues 5 to 52 (ANAV…PLPE) and 81 to 124 (AVDL…NEDA).

Belongs to the MraZ family. Forms oligomers.

The protein localises to the cytoplasm. Its subcellular location is the nucleoid. This chain is Transcriptional regulator MraZ, found in Azotobacter vinelandii (strain DJ / ATCC BAA-1303).